The following is a 387-amino-acid chain: Galactokinase (387 aa).

Residue 33 to 36 coordinates substrate; sequence EHID. Residues serine 67 and 124–130 contribute to the ATP site; that span reads GAGLSSS. Mg(2+)-binding residues include serine 130 and glutamate 162. Aspartate 174 serves as the catalytic Proton acceptor. Residue tyrosine 224 coordinates substrate.

It belongs to the GHMP kinase family. GalK subfamily.

The protein resides in the cytoplasm. The enzyme catalyses alpha-D-galactose + ATP = alpha-D-galactose 1-phosphate + ADP + H(+). It participates in carbohydrate metabolism; galactose metabolism. Functionally, catalyzes the transfer of the gamma-phosphate of ATP to D-galactose to form alpha-D-galactose-1-phosphate (Gal-1-P). The sequence is that of Galactokinase from Clostridium perfringens (strain ATCC 13124 / DSM 756 / JCM 1290 / NCIMB 6125 / NCTC 8237 / Type A).